Reading from the N-terminus, the 765-residue chain is FHF complex subunit HOOK interacting protein 2A (765 aa).

Composition is skewed to polar residues over residues leucine 200–glutamine 209 and asparagine 538–proline 550. Disordered stretches follow at residues leucine 200–aspartate 234 and asparagine 538–lysine 562.

Belongs to the FHIP family.

May be required for proper functioning of the nervous system. This chain is FHF complex subunit HOOK interacting protein 2A (FHIP2A), found in Bos taurus (Bovine).